A 310-amino-acid polypeptide reads, in one-letter code: Tyrosine recombinase XerC (310 aa).

The region spanning 22–103 (SQMLEAIEDF…SVKSFSTWAV (82 aa)) is the Core-binding (CB) domain. The Tyr recombinase domain occupies 124–304 (NLPRVLGEVQ…SSQRLLEAFR (181 aa)). Active-site residues include R165, K189, H256, R259, and H282. The active-site O-(3'-phospho-DNA)-tyrosine intermediate is the Y291.

This sequence belongs to the 'phage' integrase family. XerC subfamily. In terms of assembly, forms a cyclic heterotetrameric complex composed of two molecules of XerC and two molecules of XerD.

The protein localises to the cytoplasm. Site-specific tyrosine recombinase, which acts by catalyzing the cutting and rejoining of the recombining DNA molecules. The XerC-XerD complex is essential to convert dimers of the bacterial chromosome into monomers to permit their segregation at cell division. It also contributes to the segregational stability of plasmids. The protein is Tyrosine recombinase XerC of Corynebacterium efficiens (strain DSM 44549 / YS-314 / AJ 12310 / JCM 11189 / NBRC 100395).